The sequence spans 261 residues: Probable membrane transporter protein XF_0764 (261 aa).

The next 8 membrane-spanning stretches (helical) occupy residues 6–26, 29–49, 78–98, 99–119, 150–170, 175–195, 205–225, and 239–259; these read LIVTIGSGGLVGFALGLLGGG, ILATPLLLYVVGVTNPHIAIG, VIFALVGTLGAFLGSSIGMLI, DGQRLLLLFGLLMAMVGLLML, AASGFFGIGGGFLIVPALIFA, TINAIGSSLLAVGTFGLITTL, WTIAMEFIVGGITGGGLGTLL, and VFGLIVIAVAIYVIWRSWASL.

The protein belongs to the 4-toluene sulfonate uptake permease (TSUP) (TC 2.A.102) family.

It localises to the cell membrane. This Xylella fastidiosa (strain 9a5c) protein is Probable membrane transporter protein XF_0764.